Here is a 506-residue protein sequence, read N- to C-terminus: Lysine--tRNA ligase (506 aa).

Positions 415 and 422 each coordinate Mg(2+).

The protein belongs to the class-II aminoacyl-tRNA synthetase family. As to quaternary structure, homodimer. It depends on Mg(2+) as a cofactor.

The protein resides in the cytoplasm. It catalyses the reaction tRNA(Lys) + L-lysine + ATP = L-lysyl-tRNA(Lys) + AMP + diphosphate. The sequence is that of Lysine--tRNA ligase from Erwinia tasmaniensis (strain DSM 17950 / CFBP 7177 / CIP 109463 / NCPPB 4357 / Et1/99).